The chain runs to 487 residues: MNQDTPLANLNGPEVPSGNVPPANPPGRTNVAPPAQGAVQQPPAPAARRARNPHGPVPPAGPSRSAGAPAMLELSAAYPMYTEQRRAPNYYVPDAQLLFHTLGVCDQLMTTTDRFLRSMPSWLPIVSQLYVSVLWNVMILKVYVNTGYGAAYAHDLDVLLNHLQINECMIPGPLVPFFQSLAAVNGPFDWIGDIIPAMPSFTELWTDEFAPHAAYARQIPIPAILLDQLYRFATLAFDAQLQTNYATFEWYSNIFNQDVNTHNARLRLGPQLCGSLFTTQAQCDSARAFWNPAFANGFTRIDAANGPLMAFPQLLGFISQDGALQSNWFMHISLIMHKYAQYFNGSVPLKSISPVGIGASVIYGTPLEDTNVRDWLYPAAAAIAPFRSTRFLPRRELPATLAVRFAHADHEIEEQAEQYSILCHTNMKWYVNNATQNNHTAIEGNYIHQGEYWNFTPFRYSPPVSLKTQFAQVIASRYHQQAANRAE.

The interval 1–66 (MNQDTPLANL…VPPAGPSRSA (66 aa)) is disordered. Residues 30–41 (NVAPPAQGAVQQ) are compositionally biased toward low complexity.

The protein localises to the virion. In terms of biological role, the capsid protein self-assembles to form an icosahedral capsid with a T=2 symmetry made of 120 subunits. In Trifolium repens (Creeping white clover), this protein is Capsid protein.